We begin with the raw amino-acid sequence, 243 residues long: Carboxy-S-adenosyl-L-methionine synthase (243 aa).

Residues Tyr-40, 65 to 67, 90 to 91, 118 to 119, Asn-133, and Arg-200 each bind S-adenosyl-L-methionine; these read GCS, DN, and DI.

The protein belongs to the class I-like SAM-binding methyltransferase superfamily. Cx-SAM synthase family. As to quaternary structure, homodimer.

It catalyses the reaction prephenate + S-adenosyl-L-methionine = carboxy-S-adenosyl-L-methionine + 3-phenylpyruvate + H2O. Catalyzes the conversion of S-adenosyl-L-methionine (SAM) to carboxy-S-adenosyl-L-methionine (Cx-SAM). The sequence is that of Carboxy-S-adenosyl-L-methionine synthase from Shewanella loihica (strain ATCC BAA-1088 / PV-4).